A 495-amino-acid chain; its full sequence is GTPase Der (495 aa).

EngA-type G domains lie at 3–166 (PVVA…VQDE) and 208–381 (IKLA…SCAT). Residues 9-16 (GRPNVGKS), 56-60 (DTGGI), 118-121 (NKTD), 214-221 (GRPNVGKS), 261-265 (DTAGV), and 326-329 (NKWD) each bind GTP. The KH-like domain occupies 382 to 466 (RRVSTAMLTR…PIRIQFKEGE (85 aa)).

The protein belongs to the TRAFAC class TrmE-Era-EngA-EngB-Septin-like GTPase superfamily. EngA (Der) GTPase family. As to quaternary structure, associates with the 50S ribosomal subunit.

In terms of biological role, GTPase that plays an essential role in the late steps of ribosome biogenesis. The chain is GTPase Der from Pectobacterium atrosepticum (strain SCRI 1043 / ATCC BAA-672) (Erwinia carotovora subsp. atroseptica).